A 127-amino-acid polypeptide reads, in one-letter code: Glycine cleavage system H protein (127 aa).

A Lipoyl-binding domain is found at 24-105 (TALVGITDFA…YGEGWMVKMK (82 aa)). N6-lipoyllysine is present on K65.

The protein belongs to the GcvH family. The glycine cleavage system is composed of four proteins: P, T, L and H. (R)-lipoate is required as a cofactor.

The glycine cleavage system catalyzes the degradation of glycine. The H protein shuttles the methylamine group of glycine from the P protein to the T protein. This is Glycine cleavage system H protein from Chlorobium phaeovibrioides (strain DSM 265 / 1930) (Prosthecochloris vibrioformis (strain DSM 265)).